We begin with the raw amino-acid sequence, 299 residues long: tRNA dimethylallyltransferase (299 aa).

An ATP-binding site is contributed by 11-18; it reads GPTAVGKT. 13–18 provides a ligand contact to substrate; it reads TAVGKT. The segment at 36-39 is interaction with substrate tRNA; that stretch reads DSQQ.

It belongs to the IPP transferase family. As to quaternary structure, monomer. Mg(2+) is required as a cofactor.

The catalysed reaction is adenosine(37) in tRNA + dimethylallyl diphosphate = N(6)-dimethylallyladenosine(37) in tRNA + diphosphate. In terms of biological role, catalyzes the transfer of a dimethylallyl group onto the adenine at position 37 in tRNAs that read codons beginning with uridine, leading to the formation of N6-(dimethylallyl)adenosine (i(6)A). This chain is tRNA dimethylallyltransferase, found in Streptococcus pyogenes serotype M4 (strain MGAS10750).